We begin with the raw amino-acid sequence, 212 residues long: MAGPGPGPGDPDEQYDFLFKLVLVGDASVGKTCVVQRFKTGAFSERQGSTIGVDFTMKTLEIQGKRVKLQIWDTAGQERFRTITQSYYRSANGAILAYDITKRSSFLSVPHWIEDVRKYAGSNIVQLLIGNKSDLSELREVSLAEAQSLAEHYDILCAIETSAKDSSNVEEAFLRVATELIMRHGGPLFSEKSPDHIQLNSKDIGEGWGCGC.

25 to 32 lines the GTP pocket; that stretch reads GDASVGKT. Positions 47 to 55 match the Effector region motif; it reads QGSTIGVDF. Phosphoserine is present on S49. 73 to 77 is a binding site for GTP; sequence DTAGQ. Residue T82 is modified to Phosphothreonine; by LRRK2. GTP is bound by residues 131 to 134 and 163 to 164; these read NKSD and AK. S193 is subject to Phosphoserine. Residues C210 and C212 are each lipidated (S-geranylgeranyl cysteine). A Cysteine methyl ester modification is found at C212.

It belongs to the small GTPase superfamily. Rab family. As to quaternary structure, interacts with GDI1, GDI2, CHM and CHML; phosphorylation at Thr-82 disrupts these interactions. Widely expressed in brain, testis, lung, heart, ovary, colon, kidney, uterus and spleen but not in liver.

It is found in the cytoplasmic vesicle. It localises to the phagosome. The protein localises to the phagosome membrane. The protein resides in the golgi apparatus. Its subcellular location is the trans-Golgi network membrane. It is found in the trans-Golgi network. The small GTPases Rab are key regulators of intracellular membrane trafficking, from the formation of transport vesicles to their fusion with membranes. Rabs cycle between an inactive GDP-bound form and an active GTP-bound form that is able to recruit to membranes different set of downstream effectors directly responsible for vesicle formation, movement, tethering and fusion. The low intrinsic GTPase activity of RAB43 is activated by USP6NL. Involved in retrograde transport from the endocytic pathway to the Golgi apparatus. Involved in the transport of Shiga toxin from early and recycling endosomes to the trans-Golgi network. Required for the structural integrity of the Golgi complex. Plays a role in the maturation of phagosomes that engulf pathogens, such as S.aureus and M.tuberculosis. In Homo sapiens (Human), this protein is Ras-related protein Rab-43 (RAB43).